A 383-amino-acid polypeptide reads, in one-letter code: Succinyl-diaminopimelate desuccinylase (383 aa).

Residue H74 participates in Zn(2+) binding. Residue D76 is part of the active site. Position 107 (D107) interacts with Zn(2+). Catalysis depends on E141, which acts as the Proton acceptor. Zn(2+)-binding residues include E142, E170, and H356.

Belongs to the peptidase M20A family. DapE subfamily. Homodimer. Requires Zn(2+) as cofactor. The cofactor is Co(2+).

The enzyme catalyses N-succinyl-(2S,6S)-2,6-diaminopimelate + H2O = (2S,6S)-2,6-diaminopimelate + succinate. The protein operates within amino-acid biosynthesis; L-lysine biosynthesis via DAP pathway; LL-2,6-diaminopimelate from (S)-tetrahydrodipicolinate (succinylase route): step 3/3. Its function is as follows. Catalyzes the hydrolysis of N-succinyl-L,L-diaminopimelic acid (SDAP), forming succinate and LL-2,6-diaminopimelate (DAP), an intermediate involved in the bacterial biosynthesis of lysine and meso-diaminopimelic acid, an essential component of bacterial cell walls. This Cupriavidus pinatubonensis (strain JMP 134 / LMG 1197) (Cupriavidus necator (strain JMP 134)) protein is Succinyl-diaminopimelate desuccinylase.